A 320-amino-acid polypeptide reads, in one-letter code: uncharacterized protein (320 aa).

Interacts with VP1054, VP39 and VP80.

Its subcellular location is the virion. It is found in the host nucleus. The protein localises to the host cytoplasm. In terms of biological role, plays a role in nucleocapsid assembly and is essential for viral replication. Distributed over the cylindrical capsid sheath of nucleocapsid. This is an uncharacterized protein from Lepidoptera (butterflies and moths).